Reading from the N-terminus, the 740-residue chain is Elongation factor 2 (740 aa).

A tr-type G domain is found at 23–264 (AQIRNAGTLA…MIIEHVPPPN (242 aa)). Residues 32-39 (AHVDHGKT), 98-102 (DTPGH), and 152-155 (NKID) each bind GTP. Residue histidine 605 is modified to Diphthamide.

Belongs to the TRAFAC class translation factor GTPase superfamily. Classic translation factor GTPase family. EF-G/EF-2 subfamily.

The protein resides in the cytoplasm. Functionally, catalyzes the GTP-dependent ribosomal translocation step during translation elongation. During this step, the ribosome changes from the pre-translocational (PRE) to the post-translocational (POST) state as the newly formed A-site-bound peptidyl-tRNA and P-site-bound deacylated tRNA move to the P and E sites, respectively. Catalyzes the coordinated movement of the two tRNA molecules, the mRNA and conformational changes in the ribosome. The chain is Elongation factor 2 from Pyrobaculum calidifontis (strain DSM 21063 / JCM 11548 / VA1).